Reading from the N-terminus, the 201-residue chain is Snake venom metalloproteinase trimerelysin-2 (201 aa).

Residue glutamine 1 is modified to Pyrrolidone carboxylic acid. The Peptidase M12B domain maps to 6–201 (RYIELAIVVD…YNPQCILNAP (196 aa)). Asparagine 72 is a glycosylation site (N-linked (GlcNAc...) asparagine). Disulfide bonds link cysteine 117–cysteine 196, cysteine 158–cysteine 180, and cysteine 160–cysteine 163. Position 142 (histidine 142) interacts with Zn(2+). Residue glutamate 143 is part of the active site. Zn(2+)-binding residues include histidine 146 and histidine 152.

Belongs to the venom metalloproteinase (M12B) family. P-I subfamily. As to quaternary structure, monomer. Zn(2+) serves as cofactor. In terms of tissue distribution, expressed by the venom gland.

The protein resides in the secreted. The catalysed reaction is Cleavage of 3-Asn-|-Gln-4, 10-His-|-Leu-11 and 14-Ala-|-Leu-15 in the insulin B chain, and the bond Z-Gly-Pro-|-Leu-Gly-Pro in a small molecule substrate of microbial collagenase.. Its function is as follows. Major venom non-hemorrhagic metalloproteinase. This chain is Snake venom metalloproteinase trimerelysin-2, found in Protobothrops flavoviridis (Habu).